The sequence spans 426 residues: L-cysteine:1D-myo-inositol 2-amino-2-deoxy-alpha-D-glucopyranoside ligase (426 aa).

Zn(2+) is bound at residue Cys-45. L-cysteinyl-5'-AMP-binding positions include Cys-45–Thr-48, Thr-60, and Asn-83–Thr-85. The short motif at Ile-47–His-57 is the 'HIGH' region element. Positions Glu-199–Pro-204 match the 'ERGGDP' region motif. Position 239 (Trp-239) interacts with L-cysteinyl-5'-AMP. Cys-243 is a Zn(2+) binding site. L-cysteinyl-5'-AMP is bound at residue Gly-261–Asp-263. Residue His-268 coordinates Zn(2+). L-cysteinyl-5'-AMP is bound at residue Val-294. Residues Lys-300–Ser-304 carry the 'KMSKS' region motif.

This sequence belongs to the class-I aminoacyl-tRNA synthetase family. MshC subfamily. In terms of assembly, monomer. The cofactor is Zn(2+).

The catalysed reaction is 1D-myo-inositol 2-amino-2-deoxy-alpha-D-glucopyranoside + L-cysteine + ATP = 1D-myo-inositol 2-(L-cysteinylamino)-2-deoxy-alpha-D-glucopyranoside + AMP + diphosphate + H(+). In terms of biological role, catalyzes the ATP-dependent condensation of GlcN-Ins and L-cysteine to form L-Cys-GlcN-Ins. This is L-cysteine:1D-myo-inositol 2-amino-2-deoxy-alpha-D-glucopyranoside ligase from Clavibacter michiganensis subsp. michiganensis (strain NCPPB 382).